The following is an 86-amino-acid chain: Co-chaperonin GroES (86 aa).

Belongs to the GroES chaperonin family. As to quaternary structure, heptamer of 7 subunits arranged in a ring. Interacts with the chaperonin GroEL.

The protein localises to the cytoplasm. Together with the chaperonin GroEL, plays an essential role in assisting protein folding. The GroEL-GroES system forms a nano-cage that allows encapsulation of the non-native substrate proteins and provides a physical environment optimized to promote and accelerate protein folding. GroES binds to the apical surface of the GroEL ring, thereby capping the opening of the GroEL channel. In Campylobacter jejuni subsp. jejuni serotype O:6 (strain 81116 / NCTC 11828), this protein is Co-chaperonin GroES.